A 698-amino-acid polypeptide reads, in one-letter code: Dynein regulatory complex protein 1 (698 aa).

Composition is skewed to basic and acidic residues over residues 27–47 and 76–90; these read ALRE…EIGK and AGDD…QEEQ. Disordered regions lie at residues 27–50 and 71–90; these read ALRE…KGKQ and SSVR…QEEQ. A coiled-coil region spans residues 183 to 367; it reads MSRQFVEVQN…DLQSKFRHFE (185 aa). The disordered stretch occupies residues 425–461; that stretch reads SGGGAAAAATGGAAGGAAAAGGVGPNGEEESEEDAAA. Over residues 436 to 449 the composition is skewed to gly residues; that stretch reads GAAGGAAAAGGVGP. Residues 655-685 adopt a coiled-coil conformation; that stretch reads QERAGSLRDVESLQHQNNELRALLNQYLSSR.

Belongs to the DRC1 family. Component of the nexin-dynein regulatory complex (N-DRC). Interacts with DRC4 and DRC5.

The protein resides in the cytoplasm. It is found in the cytoskeleton. Its subcellular location is the cilium axoneme. It localises to the flagellum axoneme. Its function is as follows. Component of the nexin-dynein regulatory complex (N-DRC) a key regulator of ciliary/flagellar motility which maintains the alignment and integrity of the distal axoneme and regulates microtubule sliding in motile axonemes. Plays a critical role in the assembly of N-DRC and also stabilizes the assembly of multiple inner dynein arms and radial spokes. Coassembles with DRC2 to form a central scaffold needed for assembly of the N-DRC and its attachment to the outer doublet microtubules. The polypeptide is Dynein regulatory complex protein 1 (DRC1) (Chlamydomonas reinhardtii (Chlamydomonas smithii)).